We begin with the raw amino-acid sequence, 904 residues long: Auxilin-related protein 1 (904 aa).

Disordered stretches follow at residues 46-99 (AAGK…FDYD), 150-731 (SSIS…NLRK), and 749-776 (SASQ…RHQR). Over residues 59-69 (DPGRDGDDLLF) the composition is skewed to basic and acidic residues. Over residues 81 to 95 (YGSSSGDSRSPSAPA) the composition is skewed to low complexity. A compositionally biased stretch (basic and acidic residues) spans 178-188 (KGADSDREEKG). The span at 201–215 (RTSSPPSKRTTSETT) shows a compositional bias: low complexity. Over residues 232-244 (VEEDPFVVLEESE) the composition is skewed to acidic residues. Positions 245 to 271 (STPREPSRTDPLDDIGKFNSRKTDHSS) are enriched in basic and acidic residues. Residues 370 to 383 (SAPPPTRPPPPRPT) are compositionally biased toward pro residues. Polar residues predominate over residues 394–419 (SIPTSAYHSHVPSSGRASVNSPTASQ). Residues 456 to 663 (SAAAMKDAMD…AAAEARGRAA (208 aa)) adopt a coiled-coil conformation. 2 stretches are compositionally biased toward basic and acidic residues: residues 462-570 (DAMD…EAHA) and 581-660 (TDAR…EARG). The R domain occupies 619-640 (REKAEKAAAEAKERANAEAREK). The segment covering 661 to 673 (RAAAQAKAKQQQE) has biased composition (low complexity). The span at 674 to 697 (NTNDLDSFFSSISRPNSAPRQRTN) shows a compositional bias: polar residues. The stretch at 762-804 (ETEERRRARLERHQRTQERAAKALAEKNERDLQVQREQVEKDR) forms a coiled coil. Residues 764–776 (EERRRARLERHQR) show a composition bias toward basic and acidic residues. Residues 839–904 (CGWQPVSLTD…WNKFNSEELF (66 aa)) form the J domain.

Interacts with SH3P1.

Its subcellular location is the cell membrane. The protein resides in the golgi apparatus. The protein localises to the trans-Golgi network. It is found in the endoplasmic reticulum. It localises to the cytoplasmic vesicle. Its function is as follows. Promotes uncoating of clathrin-coated vesicles. May interact directly with clathrin. The sequence is that of Auxilin-related protein 1 from Arabidopsis thaliana (Mouse-ear cress).